The following is a 179-amino-acid chain: uncharacterized protein (179 aa).

Positions 21–109 (QQDAVILVDV…WKQAGLPTVK (89 aa)) constitute a Rhodanese domain. Transmembrane regions (helical) follow at residues 115 to 135 (ISIM…GVLL) and 138 to 158 (FVAP…LFAG).

It is found in the cell membrane. This is an uncharacterized protein from Synechocystis sp. (strain ATCC 27184 / PCC 6803 / Kazusa).